The primary structure comprises 145 residues: D-aminoacyl-tRNA deacylase (145 aa).

The Gly-cisPro motif, important for rejection of L-amino acids motif lies at 137–138 (GP).

This sequence belongs to the DTD family. As to quaternary structure, homodimer.

Its subcellular location is the cytoplasm. The catalysed reaction is glycyl-tRNA(Ala) + H2O = tRNA(Ala) + glycine + H(+). It catalyses the reaction a D-aminoacyl-tRNA + H2O = a tRNA + a D-alpha-amino acid + H(+). Its function is as follows. An aminoacyl-tRNA editing enzyme that deacylates mischarged D-aminoacyl-tRNAs. Also deacylates mischarged glycyl-tRNA(Ala), protecting cells against glycine mischarging by AlaRS. Acts via tRNA-based rather than protein-based catalysis; rejects L-amino acids rather than detecting D-amino acids in the active site. By recycling D-aminoacyl-tRNA to D-amino acids and free tRNA molecules, this enzyme counteracts the toxicity associated with the formation of D-aminoacyl-tRNA entities in vivo and helps enforce protein L-homochirality. In Pseudomonas fluorescens (strain ATCC BAA-477 / NRRL B-23932 / Pf-5), this protein is D-aminoacyl-tRNA deacylase.